We begin with the raw amino-acid sequence, 97 residues long: Co-chaperonin GroES (97 aa).

It belongs to the GroES chaperonin family. As to quaternary structure, heptamer of 7 subunits arranged in a ring. Interacts with the chaperonin GroEL.

The protein resides in the cytoplasm. Its function is as follows. Together with the chaperonin GroEL, plays an essential role in assisting protein folding. The GroEL-GroES system forms a nano-cage that allows encapsulation of the non-native substrate proteins and provides a physical environment optimized to promote and accelerate protein folding. GroES binds to the apical surface of the GroEL ring, thereby capping the opening of the GroEL channel. In Klebsiella pneumoniae subsp. pneumoniae (strain ATCC 700721 / MGH 78578), this protein is Co-chaperonin GroES.